A 106-amino-acid polypeptide reads, in one-letter code: UPF0145 protein VCM66_A0911 (106 aa).

The protein belongs to the UPF0145 family.

The chain is UPF0145 protein VCM66_A0911 from Vibrio cholerae serotype O1 (strain M66-2).